We begin with the raw amino-acid sequence, 469 residues long: UDP-glycosyltransferase 43 (469 aa).

UDP-alpha-D-glucose-binding positions include Ser-280, Trp-345 to Val-346, His-363 to Glu-371, and Tyr-385 to Gln-388.

This sequence belongs to the UDP-glycosyltransferase family.

With respect to regulation, inhibited by Cu(2+) or Zn(2+). In terms of biological role, glycosyltransferase that catalyzes the C-glucosylation of daidzein to puerarin. Shows activity with the isoflavones daidzein and genistein, but has no activity towards flavonoids such as 2-hydroxynaringenin. Can use UDP-glucose, but not UDP-galactose or UDP-glucuronic acid as sugar donor. Does not require bivalent cations for activity. The polypeptide is UDP-glycosyltransferase 43 (Pueraria montana var. lobata (Kudzu vine)).